An 81-amino-acid chain; its full sequence is Sulfur carrier protein TusA (81 aa).

Catalysis depends on Cys-19, which acts as the Cysteine persulfide intermediate.

Belongs to the sulfur carrier protein TusA family. Interacts with IscS.

It is found in the cytoplasm. Its pathway is tRNA modification. Sulfur carrier protein involved in sulfur trafficking in the cell. Part of a sulfur-relay system required for 2-thiolation during synthesis of 2-thiouridine of the modified wobble base 5-methylaminomethyl-2-thiouridine (mnm(5)s(2)U) in tRNA. Interacts with IscS and stimulates its cysteine desulfurase activity. Accepts an activated sulfur from IscS, which is then transferred to TusD, and thus determines the direction of sulfur flow from IscS to 2-thiouridine formation. Also appears to be involved in sulfur transfer for the biosynthesis of molybdopterin. The polypeptide is Sulfur carrier protein TusA (Escherichia fergusonii (strain ATCC 35469 / DSM 13698 / CCUG 18766 / IAM 14443 / JCM 21226 / LMG 7866 / NBRC 102419 / NCTC 12128 / CDC 0568-73)).